A 112-amino-acid chain; its full sequence is Probable small nuclear ribonucleoprotein Sm D2 (112 aa).

The span at 1-15 shows a compositional bias: basic and acidic residues; the sequence is MSRMNDETMEDKPDD. A disordered region spans residues 1 to 23; it reads MSRMNDETMEDKPDDSNGPLSIL. Residues 20–106 enclose the Sm domain; that stretch reads LSILMDSVNN…VILVLKNPLG (87 aa).

The protein belongs to the snRNP core protein family.

The protein resides in the nucleus. The protein localises to the cytoplasm. It is found in the cytosol. Its function is as follows. Plays a role in pre-mRNA splicing as a core component of the spliceosomal U1, U2, U4 and U5 small nuclear ribonucleoproteins (snRNPs), the building blocks of the spliceosome. The protein is Probable small nuclear ribonucleoprotein Sm D2 (snrpd2) of Dictyostelium discoideum (Social amoeba).